A 160-amino-acid chain; its full sequence is Crossover junction endodeoxyribonuclease RuvC (160 aa).

Active-site residues include Asp9, Glu68, and Asp141. Positions 9, 68, and 141 each coordinate Mg(2+).

It belongs to the RuvC family. Homodimer which binds Holliday junction (HJ) DNA. The HJ becomes 2-fold symmetrical on binding to RuvC with unstacked arms; it has a different conformation from HJ DNA in complex with RuvA. In the full resolvosome a probable DNA-RuvA(4)-RuvB(12)-RuvC(2) complex forms which resolves the HJ. It depends on Mg(2+) as a cofactor.

Its subcellular location is the cytoplasm. The enzyme catalyses Endonucleolytic cleavage at a junction such as a reciprocal single-stranded crossover between two homologous DNA duplexes (Holliday junction).. In terms of biological role, the RuvA-RuvB-RuvC complex processes Holliday junction (HJ) DNA during genetic recombination and DNA repair. Endonuclease that resolves HJ intermediates. Cleaves cruciform DNA by making single-stranded nicks across the HJ at symmetrical positions within the homologous arms, yielding a 5'-phosphate and a 3'-hydroxyl group; requires a central core of homology in the junction. The consensus cleavage sequence is 5'-(A/T)TT(C/G)-3'. Cleavage occurs on the 3'-side of the TT dinucleotide at the point of strand exchange. HJ branch migration catalyzed by RuvA-RuvB allows RuvC to scan DNA until it finds its consensus sequence, where it cleaves and resolves the cruciform DNA. The polypeptide is Crossover junction endodeoxyribonuclease RuvC (Campylobacter jejuni (strain RM1221)).